The primary structure comprises 127 residues: Calcitonin receptor-stimulating peptide 1 (127 aa).

A signal peptide spans 1–25 (MGFWKFSPFLVLGILALYQVGFLQA). Positions 26-79 (APFRSALENPPDSGVRNEEELRLLLAAVMKDYMQMKTHELEQEQETEGSRVAVQ) are excised as a propeptide. Cys83 and Cys88 form a disulfide bridge.

The protein belongs to the calcitonin family.

The protein resides in the secreted. In terms of biological role, stimulates cAMP production in porcine kidney cell line LLC-PK1 via the calcitonin receptor (CT) but not via the CT-like (CL) receptor. The sequence is that of Calcitonin receptor-stimulating peptide 1 (CRSP1) from Canis lupus familiaris (Dog).